We begin with the raw amino-acid sequence, 262 residues long: Sulfur carrier protein FdhD (262 aa).

The active-site Cysteine persulfide intermediate is cysteine 105. 246–251 (FVRKNR) lines the Mo-bis(molybdopterin guanine dinucleotide) pocket.

It belongs to the FdhD family.

Its subcellular location is the cytoplasm. In terms of biological role, required for formate dehydrogenase (FDH) activity. Acts as a sulfur carrier protein that transfers sulfur from IscS to the molybdenum cofactor prior to its insertion into FDH. The chain is Sulfur carrier protein FdhD from Picrophilus torridus (strain ATCC 700027 / DSM 9790 / JCM 10055 / NBRC 100828 / KAW 2/3).